A 523-amino-acid polypeptide reads, in one-letter code: GMP synthase [glutamine-hydrolyzing] (523 aa).

One can recognise a Glutamine amidotransferase type-1 domain in the interval 8-205 (KILILDFGSQ…VVGICGCECK (198 aa)). Catalysis depends on C85, which acts as the Nucleophile. Residues H179 and E181 contribute to the active site. Positions 206-398 (WTAENIIEDA…LGLPAEMLNR (193 aa)) constitute a GMPS ATP-PPase domain. ATP is bound at residue 233 to 239 (SGGVDSS).

Homodimer.

It catalyses the reaction XMP + L-glutamine + ATP + H2O = GMP + L-glutamate + AMP + diphosphate + 2 H(+). It participates in purine metabolism; GMP biosynthesis; GMP from XMP (L-Gln route): step 1/1. Functionally, catalyzes the synthesis of GMP from XMP. This Actinobacillus pleuropneumoniae serotype 3 (strain JL03) protein is GMP synthase [glutamine-hydrolyzing].